Reading from the N-terminus, the 414-residue chain is Methyl-CpG-binding domain protein 2 (414 aa).

The segment at 1-152 (MRAHPGGGRC…GPRATESGKR (152 aa)) is required for interaction with DHX9 and PRMT5. The tract at residues 1-163 (MRAHPGGGRC…DCPALPPGWK (163 aa)) is disordered. Basic residues predominate over residues 77-95 (GRGRGRGRGRGRGRGRGRG). Residues 98–123 (QSGGSGLGGDGGGGAGGCGGGSGGGV) are compositionally biased toward gly residues. An MBD domain is found at 148–216 (ESGKRMDCPA…SSFDFRTGKM (69 aa)). Position 184 is a phosphoserine (S184). Positions 217-244 (MPSKLQKNKQRLRNDPLNQNKGKPDLNT) are disordered. Residues 232 to 244 (PLNQNKGKPDLNT) are compositionally biased toward polar residues. Residue S410 is modified to Phosphoserine.

As to quaternary structure, heterodimer with MBD3 (via N-terminus). Component of the MeCP1 complex that contains HDAC1 and HDAC2. Component of the nucleosome remodeling and deacetylase (NuRD) repressor complex, composed of core proteins MTA1, MTA2, MTA3, RBBP4, RBBP7, HDAC1, HDAC2, MBD2, MBD3, and peripherally associated proteins CDK2AP1, CDK2AP2, GATAD2A, GATAD2B, CHD3, CHD4 and CHD5. The exact stoichiometry of the NuRD complex is unknown, and some subunits such as MBD2 and MBD3, GATAD2A and GATAD2B, and CHD3, CHD4 and CHD5 define mutually exclusive NuRD complexes. Interacts with CDK2AP1. Interacts with DHX9. Interacts with DNMT1. Interacts with GATAD2A/p66-alpha. Interacts with GATAD2B/p66-beta. Interacts with GPN1. Interacts with MIZF. Interacts with PRMT5. Interacts with SIN3A. Interacts with SPHK2. Highly expressed in brain, heart, kidney, lung, skeletal muscle, spleen and testis. Detected at lower levels in embryonic stem cells.

It is found in the nucleus. The protein localises to the chromosome. Functionally, binds CpG islands in promoters where the DNA is methylated at position 5 of cytosine within CpG dinucleotides. Binds hemimethylated DNA as well. Recruits histone deacetylases and DNA methyltransferases to chromatin. Acts as a component of the histone deacetylase NuRD complex which participates in the remodeling of chromatin. Acts as transcriptional repressor and plays a role in gene silencing. Functions as a scaffold protein, targeting GATAD2A and GATAD2B to chromatin to promote repression. May enhance the activation of some unmethylated cAMP-responsive promoters. Selectively represses transcription activity of methylated rRNA promoters. This is Methyl-CpG-binding domain protein 2 from Mus musculus (Mouse).